We begin with the raw amino-acid sequence, 314 residues long: Methionyl-tRNA formyltransferase (314 aa).

113-116 (SLLP) is a (6S)-5,6,7,8-tetrahydrofolate binding site.

The protein belongs to the Fmt family.

It carries out the reaction L-methionyl-tRNA(fMet) + (6R)-10-formyltetrahydrofolate = N-formyl-L-methionyl-tRNA(fMet) + (6S)-5,6,7,8-tetrahydrofolate + H(+). Attaches a formyl group to the free amino group of methionyl-tRNA(fMet). The formyl group appears to play a dual role in the initiator identity of N-formylmethionyl-tRNA by promoting its recognition by IF2 and preventing the misappropriation of this tRNA by the elongation apparatus. The sequence is that of Methionyl-tRNA formyltransferase from Serratia proteamaculans (strain 568).